The primary structure comprises 278 residues: Hydroxyethylthiazole kinase (278 aa).

Met-48 provides a ligand contact to substrate. Positions 124 and 175 each coordinate ATP. Gly-202 is a binding site for substrate.

Belongs to the Thz kinase family. Mg(2+) serves as cofactor.

It carries out the reaction 5-(2-hydroxyethyl)-4-methylthiazole + ATP = 4-methyl-5-(2-phosphooxyethyl)-thiazole + ADP + H(+). Its pathway is cofactor biosynthesis; thiamine diphosphate biosynthesis; 4-methyl-5-(2-phosphoethyl)-thiazole from 5-(2-hydroxyethyl)-4-methylthiazole: step 1/1. Its function is as follows. Catalyzes the phosphorylation of the hydroxyl group of 4-methyl-5-beta-hydroxyethylthiazole (THZ). This is Hydroxyethylthiazole kinase from Clostridium botulinum (strain Eklund 17B / Type B).